A 192-amino-acid polypeptide reads, in one-letter code: Molybdenum cofactor guanylyltransferase (192 aa).

GTP is bound by residues 10–12 (LAG), Lys-23, Asn-51, Asp-69, and Asp-99. Asp-99 lines the Mg(2+) pocket.

It belongs to the MobA family. As to quaternary structure, monomer. The cofactor is Mg(2+).

The protein resides in the cytoplasm. The enzyme catalyses Mo-molybdopterin + GTP + H(+) = Mo-molybdopterin guanine dinucleotide + diphosphate. Transfers a GMP moiety from GTP to Mo-molybdopterin (Mo-MPT) cofactor (Moco or molybdenum cofactor) to form Mo-molybdopterin guanine dinucleotide (Mo-MGD) cofactor. The protein is Molybdenum cofactor guanylyltransferase of Haemophilus influenzae (strain ATCC 51907 / DSM 11121 / KW20 / Rd).